Here is a 994-residue protein sequence, read N- to C-terminus: Protein translocase subunit SecA (994 aa).

ATP-binding positions include Gln85, 103–107 (GEGKT), and Asp492. Residues 868–888 (IPDGAGPVADAQPVRPAAARQ) show a composition bias toward low complexity. A disordered region spans residues 868–994 (IPDGAGPVAD…HGDPARRNTE (127 aa)). The segment covering 889–900 (TPPPPSPVPSAP) has biased composition (pro residues). 4 residues coordinate Zn(2+): Cys973, Cys975, Cys984, and His985. Over residues 984–994 (CHGDPARRNTE) the composition is skewed to basic and acidic residues.

It belongs to the SecA family. As to quaternary structure, monomer and homodimer. Part of the essential Sec protein translocation apparatus which comprises SecA, SecYEG and auxiliary proteins SecDF. Other proteins may also be involved. Requires Zn(2+) as cofactor.

It is found in the cell membrane. The protein localises to the cytoplasm. It catalyses the reaction ATP + H2O + cellular proteinSide 1 = ADP + phosphate + cellular proteinSide 2.. In terms of biological role, part of the Sec protein translocase complex. Interacts with the SecYEG preprotein conducting channel. Has a central role in coupling the hydrolysis of ATP to the transfer of proteins into and across the cell membrane, serving as an ATP-driven molecular motor driving the stepwise translocation of polypeptide chains across the membrane. The sequence is that of Protein translocase subunit SecA from Frankia casuarinae (strain DSM 45818 / CECT 9043 / HFP020203 / CcI3).